Consider the following 306-residue polypeptide: MSSTHRPTQYSSILPAERLPEWLRRPIGSVSQLEQMQQLVKGNHLHTICEEGRCPNRGECYAAGTATFLLGGSICTRSCAFCQVMKGQSPQAIDPLEAERVADAVQQMGLRYVVLTSVARDDLPDHGVSIFTETMAAIRQRNPLIEIEVLTPDFWGGVADLAKALEAQRERLTQLLMAAPVCFNHNLETVERLQSKVRRGATYHHSLSLLAAARELAPNIPTKSGLMLGLGEEQEEVVQTLEDLRSVDCQRVTLGQYLRPSLAHIPVHRYWHPEDFKNLAEVACKLGFAQVRSGPLVRSSYHAGEE.

[4Fe-4S] cluster is bound by residues cysteine 49, cysteine 54, cysteine 60, cysteine 75, cysteine 79, cysteine 82, and serine 300. In terms of domain architecture, Radical SAM core spans 61–289 (YAAGTATFLL…AEVACKLGFA (229 aa)).

This sequence belongs to the radical SAM superfamily. Lipoyl synthase family. [4Fe-4S] cluster serves as cofactor.

The protein resides in the cytoplasm. It carries out the reaction [[Fe-S] cluster scaffold protein carrying a second [4Fe-4S](2+) cluster] + N(6)-octanoyl-L-lysyl-[protein] + 2 oxidized [2Fe-2S]-[ferredoxin] + 2 S-adenosyl-L-methionine + 4 H(+) = [[Fe-S] cluster scaffold protein] + N(6)-[(R)-dihydrolipoyl]-L-lysyl-[protein] + 4 Fe(3+) + 2 hydrogen sulfide + 2 5'-deoxyadenosine + 2 L-methionine + 2 reduced [2Fe-2S]-[ferredoxin]. It functions in the pathway protein modification; protein lipoylation via endogenous pathway; protein N(6)-(lipoyl)lysine from octanoyl-[acyl-carrier-protein]: step 2/2. Its function is as follows. Catalyzes the radical-mediated insertion of two sulfur atoms into the C-6 and C-8 positions of the octanoyl moiety bound to the lipoyl domains of lipoate-dependent enzymes, thereby converting the octanoylated domains into lipoylated derivatives. This Prochlorococcus marinus (strain MIT 9313) protein is Lipoyl synthase 2.